We begin with the raw amino-acid sequence, 249 residues long: 4-hydroxy-tetrahydrodipicolinate reductase (249 aa).

Residues Asp-32, 74–76 (GTT), and 99–102 (SANF) each bind NAD(+). Residue His-134 is the Proton donor/acceptor of the active site. His-135 is a (S)-2,3,4,5-tetrahydrodipicolinate binding site. The Proton donor role is filled by Lys-138. 144–145 (GT) contacts (S)-2,3,4,5-tetrahydrodipicolinate.

This sequence belongs to the DapB family.

It localises to the cytoplasm. It catalyses the reaction (S)-2,3,4,5-tetrahydrodipicolinate + NAD(+) + H2O = (2S,4S)-4-hydroxy-2,3,4,5-tetrahydrodipicolinate + NADH + H(+). The enzyme catalyses (S)-2,3,4,5-tetrahydrodipicolinate + NADP(+) + H2O = (2S,4S)-4-hydroxy-2,3,4,5-tetrahydrodipicolinate + NADPH + H(+). It functions in the pathway amino-acid biosynthesis; L-lysine biosynthesis via DAP pathway; (S)-tetrahydrodipicolinate from L-aspartate: step 4/4. Catalyzes the conversion of 4-hydroxy-tetrahydrodipicolinate (HTPA) to tetrahydrodipicolinate. This Chlorobaculum parvum (strain DSM 263 / NCIMB 8327) (Chlorobium vibrioforme subsp. thiosulfatophilum) protein is 4-hydroxy-tetrahydrodipicolinate reductase.